A 488-amino-acid polypeptide reads, in one-letter code: Glutamyl-tRNA(Gln) amidotransferase subunit A (488 aa).

Catalysis depends on charge relay system residues Lys-78 and Ser-153. Ser-177 acts as the Acyl-ester intermediate in catalysis.

The protein belongs to the amidase family. GatA subfamily. In terms of assembly, heterotrimer of A, B and C subunits.

It catalyses the reaction L-glutamyl-tRNA(Gln) + L-glutamine + ATP + H2O = L-glutaminyl-tRNA(Gln) + L-glutamate + ADP + phosphate + H(+). Its function is as follows. Allows the formation of correctly charged Gln-tRNA(Gln) through the transamidation of misacylated Glu-tRNA(Gln) in organisms which lack glutaminyl-tRNA synthetase. The reaction takes place in the presence of glutamine and ATP through an activated gamma-phospho-Glu-tRNA(Gln). This chain is Glutamyl-tRNA(Gln) amidotransferase subunit A, found in Caldanaerobacter subterraneus subsp. tengcongensis (strain DSM 15242 / JCM 11007 / NBRC 100824 / MB4) (Thermoanaerobacter tengcongensis).